Reading from the N-terminus, the 198-residue chain is Pyridoxal 5'-phosphate synthase subunit PdxT (198 aa).

49-51 (GES) is a binding site for L-glutamine. Cysteine 81 (nucleophile) is an active-site residue. L-glutamine-binding positions include arginine 113 and 141–142 (IR). Catalysis depends on charge relay system residues histidine 177 and glutamate 179.

The protein belongs to the glutaminase PdxT/SNO family. As to quaternary structure, in the presence of PdxS, forms a dodecamer of heterodimers. Only shows activity in the heterodimer.

The enzyme catalyses aldehydo-D-ribose 5-phosphate + D-glyceraldehyde 3-phosphate + L-glutamine = pyridoxal 5'-phosphate + L-glutamate + phosphate + 3 H2O + H(+). It carries out the reaction L-glutamine + H2O = L-glutamate + NH4(+). It functions in the pathway cofactor biosynthesis; pyridoxal 5'-phosphate biosynthesis. In terms of biological role, catalyzes the hydrolysis of glutamine to glutamate and ammonia as part of the biosynthesis of pyridoxal 5'-phosphate. The resulting ammonia molecule is channeled to the active site of PdxS. This chain is Pyridoxal 5'-phosphate synthase subunit PdxT, found in Mycobacterium leprae (strain TN).